Reading from the N-terminus, the 242-residue chain is Protein MHF1 homolog (242 aa).

The tract at residues 208–242 (LKAKEPQSERKRKKGSAKKEDKASSSNAVRITTDL) is disordered. A compositionally biased stretch (polar residues) spans 231–242 (SSSNAVRITTDL).

This sequence belongs to the TAF9 family. CENP-S/MHF1 subfamily.

It localises to the nucleus. Involved in the promotion of spontaneous somatic homologous recombination (HR) events, which is opposite to the function of FANCM in ordered HR. Only FANCM is essential for replicative repair in the absence of the endonuclease MUS81. Acts in the same pathway as FANCM to restrain class II meiotic crossing over (CO), and acts with FANCM during meiosis to repair interstrand cross-links (ICLs). This common pathway between MHF1 and FANCM is in parallel to the pathway that involves the RECQ4A helicase. The chain is Protein MHF1 homolog from Arabidopsis thaliana (Mouse-ear cress).